Consider the following 353-residue polypeptide: Dihydroorotate dehydrogenase (quinone) (353 aa).

FMN-binding positions include 66–70 and Thr90; that span reads AGFDK. Substrate is bound at residue Lys70. A substrate-binding site is contributed by 115 to 119; sequence NRMGF. FMN is bound by residues Asn143 and Asn176. Substrate is bound at residue Asn176. The Nucleophile role is filled by Ser179. Position 181 (Asn181) interacts with substrate. The FMN site is built by Lys212 and Thr240. 241 to 242 is a binding site for substrate; that stretch reads NT. Residues Gly264, Gly293, and 314–315 contribute to the FMN site; that span reads YT.

The protein belongs to the dihydroorotate dehydrogenase family. Type 2 subfamily. In terms of assembly, monomer. It depends on FMN as a cofactor.

It localises to the cell membrane. It catalyses the reaction (S)-dihydroorotate + a quinone = orotate + a quinol. The protein operates within pyrimidine metabolism; UMP biosynthesis via de novo pathway; orotate from (S)-dihydroorotate (quinone route): step 1/1. Its function is as follows. Catalyzes the conversion of dihydroorotate to orotate with quinone as electron acceptor. The protein is Dihydroorotate dehydrogenase (quinone) of Mycolicibacterium vanbaalenii (strain DSM 7251 / JCM 13017 / BCRC 16820 / KCTC 9966 / NRRL B-24157 / PYR-1) (Mycobacterium vanbaalenii).